The sequence spans 453 residues: Ribulose bisphosphate carboxylase large chain (453 aa).

Positions 1–2 (MS) are excised as a propeptide. Pro-3 is subject to N-acetylproline. Lys-14 is modified (N6,N6,N6-trimethyllysine). Substrate is bound by residues Asn-123 and Thr-173. Lys-175 serves as the catalytic Proton acceptor. Lys-177 serves as a coordination point for substrate. 3 residues coordinate Mg(2+): Lys-201, Asp-203, and Glu-204. Lys-201 carries the post-translational modification N6-carboxylysine. His-294 functions as the Proton acceptor in the catalytic mechanism. Substrate contacts are provided by Arg-295, His-327, and Ser-379.

The protein belongs to the RuBisCO large chain family. Type I subfamily. As to quaternary structure, heterohexadecamer of 8 large chains and 8 small chains; disulfide-linked. The disulfide link is formed within the large subunit homodimers. Requires Mg(2+) as cofactor. In terms of processing, the disulfide bond which can form in the large chain dimeric partners within the hexadecamer appears to be associated with oxidative stress and protein turnover.

The protein localises to the plastid. It localises to the chloroplast. The catalysed reaction is 2 (2R)-3-phosphoglycerate + 2 H(+) = D-ribulose 1,5-bisphosphate + CO2 + H2O. It catalyses the reaction D-ribulose 1,5-bisphosphate + O2 = 2-phosphoglycolate + (2R)-3-phosphoglycerate + 2 H(+). In terms of biological role, ruBisCO catalyzes two reactions: the carboxylation of D-ribulose 1,5-bisphosphate, the primary event in carbon dioxide fixation, as well as the oxidative fragmentation of the pentose substrate in the photorespiration process. Both reactions occur simultaneously and in competition at the same active site. This chain is Ribulose bisphosphate carboxylase large chain, found in Rubia tinctorum (Madder).